The sequence spans 206 residues: Uridine kinase (206 aa).

11–18 (GGSASGKT) is an ATP binding site.

It belongs to the uridine kinase family.

The protein localises to the cytoplasm. The enzyme catalyses uridine + ATP = UMP + ADP + H(+). It carries out the reaction cytidine + ATP = CMP + ADP + H(+). Its pathway is pyrimidine metabolism; CTP biosynthesis via salvage pathway; CTP from cytidine: step 1/3. It functions in the pathway pyrimidine metabolism; UMP biosynthesis via salvage pathway; UMP from uridine: step 1/1. This is Uridine kinase from Lactococcus lactis subsp. cremoris (strain MG1363).